Reading from the N-terminus, the 85-residue chain is UPF0512 protein U (85 aa).

Belongs to the UPF0512 family.

The protein is UPF0512 protein U of Dictyostelium discoideum (Social amoeba).